Reading from the N-terminus, the 159-residue chain is Ribosomal RNA large subunit methyltransferase H (159 aa).

Residues leucine 76, glycine 108, and 127-132 each bind S-adenosyl-L-methionine; that span reads FSKMTF.

It belongs to the RNA methyltransferase RlmH family. In terms of assembly, homodimer.

Its subcellular location is the cytoplasm. It carries out the reaction pseudouridine(1915) in 23S rRNA + S-adenosyl-L-methionine = N(3)-methylpseudouridine(1915) in 23S rRNA + S-adenosyl-L-homocysteine + H(+). Specifically methylates the pseudouridine at position 1915 (m3Psi1915) in 23S rRNA. This is Ribosomal RNA large subunit methyltransferase H from Bifidobacterium animalis subsp. lactis (strain AD011).